We begin with the raw amino-acid sequence, 842 residues long: MVAFTVDQMRSLMDKVTNVRNMSVIAHVDHGKSTLTDSLVQKAGIISAAKAGEARFMDTRKDEQERGITIKSTAISLYSDLPEEDVKEIPQKSDGNSFLINLIDSPGHVDFSSEVTAALRVTDGALVVVDTVEGVCVQTETVLRQALGERIKPVVCINKVDRALLELQVSKEDLYQSFSRTVESVNVIISTYSDEVLGDVQVYPSKGTVAFGSGLHGWAFTIRQFATRYAKKFGVDKQKMMERLWGDSFFNPKTKKWTNKETDTDGKPLERAFNMFVLDPIFRLFAAIMNFKKDEIPTLLEKLEINLKSDEKDLEGKALLKVVMRKFLPAADALLEMIVMHLPSPVTAQNYRAEQLYEGPADDANCIAIKKCDPTADLMLYVSKMVPTSDKGRFYAFGRVFAGTVKSGQKIRIQGPNYVPGKKDDLFLKAVQRVVLMMGSRVEPIDDCPAGNIVGLVGIDQFLLKTGTLTTSETAYNMKVMKFSVSPVVQVAVDVKNANDLPKLVEGLKRLSKSDPCVLTQMSESGEHIVAGTGELHLEICLQDLENEHAGIPLKISPPVVAYRETVEAESSQVALSKSPNKHNRIYLKAEPMDEEVSLAIEQGKINPRDDFKARARVMADEYGWDVTDARKIWCFGPDGNGPNLVVDQTKAVQYLNEIKDSVVSAFQWATKEGPILGETMRSVRVNILDVTLHADAIHRGAGQIMPTMRRATYAGFLLAEPKIQEPVFLVEIQCPEQAVGGIYSVLNKKRGQVVSEEQRPGTPLFTVKAYLPVNESFGFTGELRQATGGQAFPQMVFDHWATLNSDPLDPTSKAGEIVTAARKRHGMKEEVPGWQEYYDKL.

Positions Thr17 to Val346 constitute a tr-type G domain. Residues Ala26–Ser33, Asn158–Asp161, and Ser213–Leu215 contribute to the GTP site. His699 carries the post-translational modification Diphthamide.

It belongs to the TRAFAC class translation factor GTPase superfamily. Classic translation factor GTPase family. EF-G/EF-2 subfamily.

It is found in the cytoplasm. It carries out the reaction GTP + H2O = GDP + phosphate + H(+). Catalyzes the GTP-dependent ribosomal translocation step during translation elongation. During this step, the ribosome changes from the pre-translocational (PRE) to the post-translocational (POST) state as the newly formed A-site-bound peptidyl-tRNA and P-site-bound deacylated tRNA move to the P and E sites, respectively. Catalyzes the coordinated movement of the two tRNA molecules, the mRNA and conformational changes in the ribosome. The polypeptide is Elongation factor 2 (EFT1) (Candida glabrata (strain ATCC 2001 / BCRC 20586 / JCM 3761 / NBRC 0622 / NRRL Y-65 / CBS 138) (Yeast)).